The following is a 372-amino-acid chain: Flagellar P-ring protein (372 aa).

Positions M1 to A26 are cleaved as a signal peptide.

It belongs to the FlgI family. As to quaternary structure, the basal body constitutes a major portion of the flagellar organelle and consists of four rings (L,P,S, and M) mounted on a central rod.

The protein resides in the periplasm. Its subcellular location is the bacterial flagellum basal body. Functionally, assembles around the rod to form the L-ring and probably protects the motor/basal body from shearing forces during rotation. This chain is Flagellar P-ring protein, found in Xanthomonas oryzae pv. oryzae (strain MAFF 311018).